Reading from the N-terminus, the 894-residue chain is Probable cytoplasmic aconitate hydratase (894 aa).

Residues Gln87 and 207–209 contribute to the substrate site; that span reads DSH. [4Fe-4S] cluster contacts are provided by Cys438, Cys504, and Cys507. Residues Arg537, Arg542, and 781 to 782 each bind substrate; that span reads SR.

It belongs to the aconitase/IPM isomerase family. Requires [4Fe-4S] cluster as cofactor.

The protein resides in the cytoplasm. It is found in the cytosol. The catalysed reaction is citrate = D-threo-isocitrate. Catalyzes the isomerization of citrate to isocitrate via cis-aconitate. This chain is Probable cytoplasmic aconitate hydratase (aco1), found in Dictyostelium discoideum (Social amoeba).